Consider the following 274-residue polypeptide: 3-methyl-2-oxobutanoate hydroxymethyltransferase (274 aa).

Mg(2+) contacts are provided by D44 and D83. Residues 44–45, D83, and K113 each bind 3-methyl-2-oxobutanoate; that span reads DS. Position 115 (E115) interacts with Mg(2+). Catalysis depends on E182, which acts as the Proton acceptor.

Belongs to the PanB family. Homodecamer; pentamer of dimers. Mg(2+) serves as cofactor.

The protein resides in the cytoplasm. It catalyses the reaction 3-methyl-2-oxobutanoate + (6R)-5,10-methylene-5,6,7,8-tetrahydrofolate + H2O = 2-dehydropantoate + (6S)-5,6,7,8-tetrahydrofolate. The protein operates within cofactor biosynthesis; (R)-pantothenate biosynthesis; (R)-pantoate from 3-methyl-2-oxobutanoate: step 1/2. Its function is as follows. Catalyzes the reversible reaction in which hydroxymethyl group from 5,10-methylenetetrahydrofolate is transferred onto alpha-ketoisovalerate to form ketopantoate. The chain is 3-methyl-2-oxobutanoate hydroxymethyltransferase from Campylobacter jejuni subsp. doylei (strain ATCC BAA-1458 / RM4099 / 269.97).